Here is a 228-residue protein sequence, read N- to C-terminus: Flagellar L-ring protein (228 aa).

An N-terminal signal peptide occupies residues 1-17 (MHYLRYFAIAFLLLLSS). Cys18 carries N-palmitoyl cysteine lipidation. A lipid anchor (S-diacylglycerol cysteine) is attached at Cys18.

This sequence belongs to the FlgH family. The basal body constitutes a major portion of the flagellar organelle and consists of four rings (L,P,S, and M) mounted on a central rod.

It is found in the cell membrane. The protein resides in the bacterial flagellum basal body. Its function is as follows. Assembles around the rod to form the L-ring and probably protects the motor/basal body from shearing forces during rotation. The chain is Flagellar L-ring protein from Wigglesworthia glossinidia brevipalpis.